Here is a 273-residue protein sequence, read N- to C-terminus: Formamidopyrimidine-DNA glycosylase (273 aa).

Catalysis depends on proline 2, which acts as the Schiff-base intermediate with DNA. Glutamate 3 functions as the Proton donor in the catalytic mechanism. Lysine 57 (proton donor; for beta-elimination activity) is an active-site residue. DNA is bound by residues histidine 91, arginine 110, and lysine 151. An FPG-type zinc finger spans residues 236 to 270; sequence QVYGRKDEACNDCGTIIEAKVIGQRNSYFCPHCQM. The active-site Proton donor; for delta-elimination activity is arginine 260.

Belongs to the FPG family. As to quaternary structure, monomer. Requires Zn(2+) as cofactor.

It carries out the reaction Hydrolysis of DNA containing ring-opened 7-methylguanine residues, releasing 2,6-diamino-4-hydroxy-5-(N-methyl)formamidopyrimidine.. It catalyses the reaction 2'-deoxyribonucleotide-(2'-deoxyribose 5'-phosphate)-2'-deoxyribonucleotide-DNA = a 3'-end 2'-deoxyribonucleotide-(2,3-dehydro-2,3-deoxyribose 5'-phosphate)-DNA + a 5'-end 5'-phospho-2'-deoxyribonucleoside-DNA + H(+). In terms of biological role, involved in base excision repair of DNA damaged by oxidation or by mutagenic agents. Acts as a DNA glycosylase that recognizes and removes damaged bases. Has a preference for oxidized purines, such as 7,8-dihydro-8-oxoguanine (8-oxoG). Has AP (apurinic/apyrimidinic) lyase activity and introduces nicks in the DNA strand. Cleaves the DNA backbone by beta-delta elimination to generate a single-strand break at the site of the removed base with both 3'- and 5'-phosphates. In Actinobacillus pleuropneumoniae serotype 3 (strain JL03), this protein is Formamidopyrimidine-DNA glycosylase.